Here is a 1042-residue protein sequence, read N- to C-terminus: SWI/SNF-related matrix-associated actin-dependent regulator of chromatin subfamily A member 1 (1042 aa).

Residues 25-82 are disordered; it reads EDEQPGPSTSQEEGAAAAATEATAATEKGEKKKEKNVSSFQLKLAAKAPKSEKEMDPE. Positions 36-50 are enriched in low complexity; that stretch reads EEGAAAAATEATAAT. 2 stretches are compositionally biased toward basic and acidic residues: residues 51–60 and 73–82; these read EKGEKKKEKN and PKSEKEMDPE. Phosphoserine is present on residues serine 116 and serine 119. The 166-residue stretch at 195–360 folds into the Helicase ATP-binding domain; that stretch reads ISLYENGVNG…WALLNFLLPD (166 aa). 208 to 215 provides a ligand contact to ATP; that stretch reads DEMGLGKT. The short motif at 311-314 is the DEAH box element; that stretch reads DEAH. Positions 490–641 constitute a Helicase C-terminal domain; it reads VLDKLLAKLK…SIVIQQGRLI (152 aa). Residues lysine 650, lysine 716, and lysine 738 each participate in a glycyl lysine isopeptide (Lys-Gly) (interchain with G-Cter in SUMO2) cross-link. Residues 819-849 are disordered; it reads EQKKIDGAEPLTPEETEEKEKLLTQGFTNWT. Residues 828 to 837 show a composition bias toward basic and acidic residues; the sequence is PLTPEETEEK. The region spanning 843–895 is the SANT 1 domain; the sequence is QGFTNWTKRDFNQFIKANEKYGRDDIDNIAREVEGKSPEEVMEYSAVFWERCN. Position 942 is a phosphotyrosine (tyrosine 942). In terms of domain architecture, SANT 2 spans 946 to 1010; the sequence is KGKNYTEEED…QRRCNTLISL (65 aa).

It belongs to the SNF2/RAD54 helicase family. ISWI subfamily. In terms of assembly, may form homodimers. Component of the ACF-1 ISWI chromatin remodeling complex at least composed of SMARCA1 and BAZ1A, which regulates the spacing of histone octamers on the DNA template to facilitate access to DNA. Within the complex interacts with BAZ1A; the interaction is direct. Component of the WICH-1 ISWI chromatin remodeling complex at least composed of SMARCA1 and BAZ1B/WSTF. Within the complex interacts with BAZ1B/WSTF. Component of the NoRC-1 ISWI chromatin remodeling complex at least composed of SMARCA1 and BAZ2A/TIP5. Within the complex interacts with BAZ2A/TIP5. Component of the BRF-1 ISWI chromatin remodeling complex at least composed of SMARCA1 and BAZ2B. Within the complex interacts with BAZ2B. Component of the NURF-1 ISWI chromatin remodeling complex (also called the nucleosome-remodeling factor (NURF) complex) at least composed of SMARCA1, BPTF, RBBP4 and RBBP7. Within the complex interacts with BPTF. Within the complex interacts with RBBP4 and RBBP7. Component of the CERF-1 ISWI chromatin remodeling complex (also called the CECR2-containing-remodeling factor (CERF) complex) at least composed of CECR2 and SMARCA1. LUZP1 is detected as part of the CERF-1 complex in embryonic stem cells where it is involved in complex stabilization but is not detected in the complex in the testis. Component of the RSF-1 ISWI chromatin remodeling complex at least composed of SMARCA1 and RSF1. Within the complex interacts with RSF1. Interacts with PRLR. Interacts with ERCC6. May form homodimers. Component of the BPFT-SMARCA1 complex at least composed of SMARCA1, BPFT, RBBP4 and RBBP7; the complex is catalytically inactive and does not remodel chromatin. Within the complex interacts with BPTF, RBBP4 and RBBP7. Component of the BAZ1A-1-SMARCA1 complex at least composed of SMARCA1 and BAZ1A; the complex is catalytically inactive and does not remodel chromatin. Component of the BAZ1B-1-SMARCA1 complex at least composed of SMARCA1 and BAZ1B; the complex is catalytically inactive and does not remodel chromatin. Expressed in lung, breast, kidney, ovary, skeletal muscle and brain. As to expression, mainly expressed in non-neuronal tissues such as lung, breast, kidney, and ovary.

The protein localises to the nucleus. It localises to the chromosome. The enzyme catalyses ATP + H2O = ADP + phosphate + H(+). Functionally, ATPase that possesses intrinsic ATP-dependent chromatin-remodeling activity. ATPase activity is substrate-dependent, and is increased when nucleosomes are the substrate, but is also catalytically active when DNA alone is the substrate. Catalytic subunit of ISWI chromatin-remodeling complexes, which form ordered nucleosome arrays on chromatin and facilitate access to DNA during DNA-templated processes such as DNA replication, transcription, and repair. Within the ISWI chromatin-remodeling complexes, slides edge- and center-positioned histone octamers away from their original location on the DNA template. Catalytic activity and histone octamer sliding propensity is regulated and determined by components of the ISWI chromatin-remodeling complexes. The BAZ1A-, BAZ1B-, BAZ2A- and BAZ2B-containing ISWI chromatin-remodeling complexes regulate the spacing of nucleosomes along the chromatin and have the ability to slide mononucleosomes to the center of a DNA template. The CECR2- and RSF1-containing ISWI chromatin-remodeling complexes do not have the ability to slide mononucleosomes to the center of a DNA template. Within the NURF-1 and CERF-1 ISWI chromatin remodeling complexes, nucleosomes are the preferred substrate for its ATPase activity. Within the NURF-1 ISWI chromatin-remodeling complex, binds to the promoters of En1 and En2 to positively regulate their expression and promote brain development. May promote neurite outgrowth. May be involved in the development of luteal cells. Facilitates nucleosome assembly during DNA replication, ensuring replication fork progression and genomic stability by preventing replication stress and nascent DNA gaps. Its function is as follows. Catalytically inactive when either DNA or nucleosomes are the substrate and does not possess chromatin-remodeling activity. Acts as a negative regulator of chromatin remodelers by generating inactive complexes. The sequence is that of SWI/SNF-related matrix-associated actin-dependent regulator of chromatin subfamily A member 1 from Homo sapiens (Human).